The chain runs to 379 residues: UDP-4-amino-4-deoxy-L-arabinose--oxoglutarate aminotransferase (379 aa).

N6-(pyridoxal phosphate)lysine is present on Lys-182.

This sequence belongs to the DegT/DnrJ/EryC1 family. ArnB subfamily. Homodimer. Pyridoxal 5'-phosphate serves as cofactor.

The enzyme catalyses UDP-4-amino-4-deoxy-beta-L-arabinose + 2-oxoglutarate = UDP-beta-L-threo-pentopyranos-4-ulose + L-glutamate. It participates in nucleotide-sugar biosynthesis; UDP-4-deoxy-4-formamido-beta-L-arabinose biosynthesis; UDP-4-deoxy-4-formamido-beta-L-arabinose from UDP-alpha-D-glucuronate: step 2/3. The protein operates within bacterial outer membrane biogenesis; lipopolysaccharide biosynthesis. Its function is as follows. Catalyzes the conversion of UDP-4-keto-arabinose (UDP-Ara4O) to UDP-4-amino-4-deoxy-L-arabinose (UDP-L-Ara4N). The modified arabinose is attached to lipid A and is required for resistance to polymyxin and cationic antimicrobial peptides. In Salmonella agona (strain SL483), this protein is UDP-4-amino-4-deoxy-L-arabinose--oxoglutarate aminotransferase.